The sequence spans 433 residues: Serine carboxypeptidase-like 11 (433 aa).

A signal peptide spans 1-21 (MELTLKLLVLLLFILNHHVGS). 3 disulfide bridges follow: Cys-80/Cys-322, Cys-243/Cys-257, and Cys-281/Cys-288. N-linked (GlcNAc...) asparagine glycosylation occurs at Asn-101. Residue Ser-176 is part of the active site. A glycan (N-linked (GlcNAc...) asparagine) is linked at Asn-342. Residue Asp-358 is part of the active site. N-linked (GlcNAc...) asparagine glycosylation occurs at Asn-374. Residue His-411 is part of the active site.

It belongs to the peptidase S10 family. Ubiquitous.

The protein localises to the secreted. Probable carboxypeptidase. The polypeptide is Serine carboxypeptidase-like 11 (SCPL11) (Arabidopsis thaliana (Mouse-ear cress)).